Consider the following 579-residue polypeptide: L-ascorbate oxidase (579 aa).

The first 30 residues, 1 to 30, serve as a signal peptide directing secretion; the sequence is MLQMGKAREPNFLILFFFGLILAFGISSEG. 2 Plastocyanin-like domains span residues 33 to 152 and 164 to 330; these read IRHY…LIVD and DGEI…NYLP. Cystine bridges form between cysteine 49–cysteine 231, cysteine 111–cysteine 568, and cysteine 210–cysteine 223. Residues histidine 90 and histidine 92 each contribute to the Cu cation site. Asparagine 122 carries N-linked (GlcNAc...) asparagine glycosylation. Cu cation-binding residues include histidine 134 and histidine 136. N-linked (GlcNAc...) asparagine glycosylation is found at asparagine 355 and asparagine 470. The region spanning 374-553 is the Plastocyanin-like 3 domain; sequence NRRIFLLNTQ…HMGMGVVFAE (180 aa). Cu cation contacts are provided by histidine 475, histidine 478, histidine 480, histidine 536, cysteine 537, histidine 538, histidine 542, and methionine 547.

This sequence belongs to the multicopper oxidase family. In terms of assembly, dimer. Cu cation is required as a cofactor.

It is found in the secreted. It carries out the reaction 4 L-ascorbate + O2 = 4 monodehydro-L-ascorbate radical + 2 H2O. Functionally, may be involved in a redox system involving ascorbic acid. This Cucurbita maxima (Pumpkin) protein is L-ascorbate oxidase (AAO).